The sequence spans 763 residues: MTLTSTLGYPRVGPHRELKAALETYWRDGEEAPLLDTAKSLRRASWRLQKEHGIGHIPSNDFTLYDHVLDTICMTGAVPERFAAGAEIDLATYFAMARGAQDGTRDVAAMEMTKWFDTNYHYIVPEFSPETNFRLAFTKAIDEFAEAKALGVHTRPVLVGPFSFLKLGKATVAGFDPLDLMGRLLPVYENVLKRLAEAGADWVQIDEPCLVLELGSGDLAKCRAAYSALSAAAPSLKLMVATYFGALPEASLETAMALPVAGIHLDMVRGRSQYEAALSALPRDKLLSLGLVDGRNIWRTDMEAALTLAERAVLTLGPKRVMISAACSLLHVPFSLAGEKSLDPELKSWLAFAEEKLGELAVLARGVKEGRTSISTELAENAALFEARRNSPRIHNPAVRARVRDIDPHADRRGRPFADRQSIQQKRFGLPKLPTTTIGSFPQTSDVRKARASLRRGDWNEAQYDAFMKAEIEKTIRLQERIGLDVLVHGEPERTDMVEYFGEKLEGFAFTSLGWVQSYGSRCVKPPIIFGDVSRPEPMTVEWSRYAQSLTDRPVKGMLTGPVTILQWSFVRDDQPRSETCRQIALAIRDEVYDLEAAGLGMIQIDEPALREGLPLHRSEWDTYLRWACECFRLSVCVARDETQIHTHMCYSEFNDIIEAIADLDADVISIETSRSRMELLDAFVDFSYPNDIGPGVYDIHSPRVPARGEMLSLLRLAAERLPSERIWVNPDCGLKTRGWPETEAALVEMVEAARELRNAIGA.

5-methyltetrahydropteroyltri-L-glutamate is bound by residues R16–K19 and K114. L-homocysteine contacts are provided by residues I438–S440 and E491. L-methionine is bound by residues I438 to S440 and E491. Residues R522–C523 and W568 each bind 5-methyltetrahydropteroyltri-L-glutamate. D606 contacts L-homocysteine. D606 serves as a coordination point for L-methionine. Residue E612 participates in 5-methyltetrahydropteroyltri-L-glutamate binding. Residues H648, C650, and E672 each coordinate Zn(2+). The Proton donor role is filled by H701. Zn(2+) is bound at residue C733.

The protein belongs to the vitamin-B12 independent methionine synthase family. Requires Zn(2+) as cofactor.

The catalysed reaction is 5-methyltetrahydropteroyltri-L-glutamate + L-homocysteine = tetrahydropteroyltri-L-glutamate + L-methionine. Its pathway is amino-acid biosynthesis; L-methionine biosynthesis via de novo pathway; L-methionine from L-homocysteine (MetE route): step 1/1. Functionally, catalyzes the transfer of a methyl group from 5-methyltetrahydrofolate to homocysteine resulting in methionine formation. In Parvibaculum lavamentivorans (strain DS-1 / DSM 13023 / NCIMB 13966), this protein is 5-methyltetrahydropteroyltriglutamate--homocysteine methyltransferase.